A 204-amino-acid chain; its full sequence is Oxidoreductase iacF (204 aa).

It belongs to the oxidoreductase OpS7 family.

Its pathway is secondary metabolite biosynthesis. Oxidoreductase; part of the gene cluster that mediates the biosynthesis of iso-A82775C, a enylepoxycyclohexane and biosynthetic precursor of the chloropestolide anticancer natural products. Within the cluster, the prenyltransferase iacE prenylates siccayne to generate pestalodiol E, using dimethylallyl diphosphate (DMAPP) as cosubstrate. The probable oxidoreductase iacF is then involved in the epoxidation of pestalodiol F to pestalodiol F, which is further converted to pestalofone A by the short-chain dehydrogenase/reductase iacG. Iso-A82775C is subsequently generated from pestalofone A by the short-chain dehydrogenase/reductase iacC. Iso-A82775C is further condensed with maldoxin via a Diels-Alder reaction to produce the anticancer natural products chloropestolides A to E. This Pestalotiopsis fici (strain W106-1 / CGMCC3.15140) protein is Oxidoreductase iacF.